We begin with the raw amino-acid sequence, 284 residues long: Formamidopyrimidine-DNA glycosylase (284 aa).

Pro-2 functions as the Schiff-base intermediate with DNA in the catalytic mechanism. Catalysis depends on Glu-3, which acts as the Proton donor. Lys-58 functions as the Proton donor; for beta-elimination activity in the catalytic mechanism. Residues His-101, Arg-120, and Arg-163 each coordinate DNA. An FPG-type zinc finger spans residues 248-284 (RVYDRENAPCVTAGCPDVVRRVVQSGRSSFYCPSCQR). Residue Arg-274 is the Proton donor; for delta-elimination activity of the active site.

It belongs to the FPG family. In terms of assembly, monomer. Zn(2+) serves as cofactor.

The enzyme catalyses Hydrolysis of DNA containing ring-opened 7-methylguanine residues, releasing 2,6-diamino-4-hydroxy-5-(N-methyl)formamidopyrimidine.. It carries out the reaction 2'-deoxyribonucleotide-(2'-deoxyribose 5'-phosphate)-2'-deoxyribonucleotide-DNA = a 3'-end 2'-deoxyribonucleotide-(2,3-dehydro-2,3-deoxyribose 5'-phosphate)-DNA + a 5'-end 5'-phospho-2'-deoxyribonucleoside-DNA + H(+). In terms of biological role, involved in base excision repair of DNA damaged by oxidation or by mutagenic agents. Acts as a DNA glycosylase that recognizes and removes damaged bases. Has a preference for oxidized purines, such as 7,8-dihydro-8-oxoguanine (8-oxoG). Has AP (apurinic/apyrimidinic) lyase activity and introduces nicks in the DNA strand. Cleaves the DNA backbone by beta-delta elimination to generate a single-strand break at the site of the removed base with both 3'- and 5'-phosphates. This chain is Formamidopyrimidine-DNA glycosylase, found in Dinoroseobacter shibae (strain DSM 16493 / NCIMB 14021 / DFL 12).